A 184-amino-acid polypeptide reads, in one-letter code: UPF0398 protein BALH_1408 (184 aa).

Belongs to the UPF0398 family.

This Bacillus thuringiensis (strain Al Hakam) protein is UPF0398 protein BALH_1408.